The primary structure comprises 145 residues: Maximins 3/H11 type 3 (145 aa).

The signal sequence occupies residues M1–A18. Propeptides lie at residues R19–I43 and T75–E122. At I144 the chain carries Isoleucine amide.

The protein belongs to the bombinin family. Expressed by the skin glands.

The protein resides in the secreted. Maximin-3 shows antibacterial activity against both Gram-positive and Gram-negative bacteria. It also shows antimicrobial activity against the fungus C.albicans, but not against A.flavus nor P.uticale. It has little hemolytic activity. It possess a significant cytotoxicity against tumor cell lines. It possess a significant anti-HIV activity. It shows high spermicidal activity. Its function is as follows. Maximin-H11 shows antimicrobial activity against bacteria and against the fungus C.albicans. Shows strong hemolytic activity. The polypeptide is Maximins 3/H11 type 3 (Bombina maxima (Giant fire-bellied toad)).